The primary structure comprises 308 residues: uncharacterized protein (308 aa).

An N-terminal signal peptide occupies residues 1–28 (MILMKKFEIILFLFIAVLIFVFGYFVGA).

This is an uncharacterized protein from Methanocaldococcus jannaschii (strain ATCC 43067 / DSM 2661 / JAL-1 / JCM 10045 / NBRC 100440) (Methanococcus jannaschii).